A 261-amino-acid polypeptide reads, in one-letter code: Ribonuclease HII (261 aa).

One can recognise an RNase H type-2 domain in the interval His71–Leu260. Positions 77, 78, and 169 each coordinate a divalent metal cation.

It belongs to the RNase HII family. The cofactor is Mn(2+). It depends on Mg(2+) as a cofactor.

The protein localises to the cytoplasm. It catalyses the reaction Endonucleolytic cleavage to 5'-phosphomonoester.. In terms of biological role, endonuclease that specifically degrades the RNA of RNA-DNA hybrids. The chain is Ribonuclease HII from Oceanobacillus iheyensis (strain DSM 14371 / CIP 107618 / JCM 11309 / KCTC 3954 / HTE831).